An 832-amino-acid chain; its full sequence is SID1 transmembrane family member 2 (832 aa).

A signal peptide spans 1–18 (MIAWRLPLCVLLVASVES). The Extracellular portion of the chain corresponds to 19–293 (HLGALGPKNV…VSQAVTSEAY (275 aa)). N-linked (GlcNAc...) asparagine glycans are attached at residues asparagine 27, asparagine 54, asparagine 60, asparagine 123, asparagine 141, and asparagine 165. Residues 294 to 314 (VGGMLFCLGIFLSFYLLTVLL) traverse the membrane as a helical segment. Residues 315-447 (ACWENWRQRK…DKRVLRKKYQ (133 aa)) lie on the Cytoplasmic side of the membrane. A phosphoserine mark is found at serine 401, serine 403, and serine 404. The helical transmembrane segment at 448–468 (IYFWNIATIAVFYALPVVQLV) threads the bilayer. Topologically, residues 469–499 (ITYQTVVNVTGNQDICYYNFLCAHPLGNLSA) are extracellular. Residues asparagine 476 and asparagine 496 are each glycosylated (N-linked (GlcNAc...) asparagine). Residues 500 to 520 (FNNILSNLGYILLGLLFLLII) traverse the membrane as a helical segment. The Cytoplasmic segment spans residues 521–546 (LQREINHNRALLRNDLYALECGIPKH). A helical membrane pass occupies residues 547 to 567 (FGLFYAMGTALMMEGLLSACY). Residues 568–605 (HVCPNYTNFQFDTSFMYMIAGLCMLKLYQKRHPDINAS) are Extracellular-facing. 2 N-linked (GlcNAc...) asparagine glycosylation sites follow: asparagine 572 and asparagine 603. Residues 606 to 626 (AYSAYACLAIVIFFSVLGVVF) traverse the membrane as a helical segment. Residues 627-631 (GKGNT) are Cytoplasmic-facing. The chain crosses the membrane as a helical span at residues 632–652 (AFWIVFSVIHIISTLLLSTQL). The Extracellular segment spans residues 653-688 (YYMGRWKLDSGIFRRILHVLYTDCIRQCSGPLYTDR). A helical transmembrane segment spans residues 689-709 (MVLLVMGNIINWSLAAYGLIM). The Cytoplasmic portion of the chain corresponds to 710 to 715 (RPNDFA). Residues 716 to 736 (SYLLAIGICNLLLYFAFYIIM) traverse the membrane as a helical segment. Topologically, residues 737-746 (KLRSGERIKL) are extracellular. A helical transmembrane segment spans residues 747-767 (IPLLCIVCTSVVWGFALFFFF). Residues 768–796 (QGLSTWQKTPAESREHNRDCILLDFFDDH) are Cytoplasmic-facing. A helical membrane pass occupies residues 797-817 (DIWHFLSSIAMFGSFLVLLTL). The Extracellular segment spans residues 818-832 (DDDLDTVQRDKIYVF).

The protein belongs to the SID1 family. Interacts with adapter protein complex 1 (AP-1) and AP-2, but not AP-3 and AP-4. Interacts with LAMP2. Glycosylated. As to expression, widely expressed, including in the liver, brain and kidney (at protein level).

The protein resides in the lysosome membrane. It is found in the cell membrane. Functionally, mediates the translocation of RNA and DNA across the lysosomal membrane during RNA and DNA autophagy (RDA), a process in which RNA and DNA is directly imported into lysosomes in an ATP-dependent manner, and degraded. Involved in the uptake of single-stranded oligonucleotides by living cells, a process called gymnosis. In vitro, mediates the uptake of linear DNA more efficiently than that of circular DNA, but exhibits similar uptake efficacy toward RNA and DNA. Binds long double-stranded RNA (dsRNA) (500 - 700 base pairs), but not dsRNA shorter than 100 bp. The chain is SID1 transmembrane family member 2 (Sidt2) from Mus musculus (Mouse).